A 113-amino-acid polypeptide reads, in one-letter code: MALGWYELKLAKDGQFMFNLKAANSQVILTSELYRSRAAAENGIASVQKNGGDEKNFEFRENKNGEPYFILKAQNHQEIGRSEYYSSKAAAQNGVNSVMNNAATTVIKDITKS.

A run of 2 repeats spans residues Ala11–Phe59 and Asn62–Ile110.

It belongs to the UPF0339 family. Duplicated subfamily.

The sequence is that of UPF0339 protein MS1092 from Mannheimia succiniciproducens (strain KCTC 0769BP / MBEL55E).